Consider the following 207-residue polypeptide: Guanylate kinase (207 aa).

Residues 6 to 185 (GLLIVLSGPS…AKQRIQSIVE (180 aa)) form the Guanylate kinase-like domain. 13–20 (GPSGVGKG) is a binding site for ATP.

It belongs to the guanylate kinase family.

The protein localises to the cytoplasm. It catalyses the reaction GMP + ATP = GDP + ADP. Essential for recycling GMP and indirectly, cGMP. The sequence is that of Guanylate kinase from Staphylococcus saprophyticus subsp. saprophyticus (strain ATCC 15305 / DSM 20229 / NCIMB 8711 / NCTC 7292 / S-41).